A 336-amino-acid polypeptide reads, in one-letter code: Probable aquaglyceroporin-2 (336 aa).

A disordered region spans residues 1–46; that stretch reads MPISTINDSISESSVHKSSIPTKVEMSQNEKYSEAPSEAPTIPPPP. Over 1-64 the chain is Cytoplasmic; that stretch reads MPISTINDSI…RENCQDAFSE (64 aa). A compositionally biased stretch (low complexity) spans 9-19; the sequence is SISESSVHKSS. The helical transmembrane segment at 65-85 threads the bilayer; that stretch reads FFGTFVLLLFGDGVVAQVVLS. Over 86–94 the chain is Extracellular; sequence RGTKGDYQS. The helical transmembrane segment at 95 to 115 threads the bilayer; that stretch reads ISWGWGLGVMLGVYVGGKSGG. Over 116-135 the chain is Cytoplasmic; that stretch reads HLNPAVTLANCLFRGHPWRK. The short motif at 118–120 is the NPA 1 element; the sequence is NPA. The chain crosses the membrane as a helical span at residues 136–156; that stretch reads FPIYAVAQVLGAMAAAAVVYG. Topologically, residues 157–195 are extracellular; sequence NYKSAIDAYEGGPGIRTVIGENATAGVFCTYPAEFMTRT. A glycan (N-linked (GlcNAc...) asparagine) is linked at asparagine 178. The helical transmembrane segment at 196–216 threads the bilayer; it reads GMFFSEFIASTILQFVIFAMA. Residues 217–223 are Cytoplasmic-facing; sequence DSANIGA. Residues 224 to 244 form a helical membrane-spanning segment; the sequence is GPLMPLGLFFLIFGIGACFGW. Over 245 to 280 the chain is Extracellular; that stretch reads ETGYAINLARDFGPRLVSYMLGYGSEVWSAGGYYFW. Positions 251-253 match the NPA 2 motif; the sequence is NLA. Residues 281 to 301 traverse the membrane as a helical segment; sequence IPMVAPFFGCAFGGFLYDVFI. Topologically, residues 302 to 336 are cytoplasmic; sequence YTGPSPINTPGMGFGRLVSPRRSTWSNTYNANSPV.

The protein belongs to the MIP/aquaporin (TC 1.A.8) family.

Its subcellular location is the membrane. It carries out the reaction H2O(in) = H2O(out). It catalyses the reaction glycerol(in) = glycerol(out). Functionally, probable water/glycerol channel that may have redundant functions with FgAQP4. The chain is Probable aquaglyceroporin-2 from Gibberella zeae (strain ATCC MYA-4620 / CBS 123657 / FGSC 9075 / NRRL 31084 / PH-1) (Wheat head blight fungus).